The following is a 981-amino-acid chain: Isoleucine--tRNA ligase (981 aa).

The 'HIGH' region signature appears at 50 to 60 (PTTNGMPHVGH). Residues 604–608 (KMSKS) carry the 'KMSKS' region motif. K607 contacts ATP.

It belongs to the class-I aminoacyl-tRNA synthetase family. IleS type 2 subfamily. In terms of assembly, monomer. It depends on Zn(2+) as a cofactor.

It localises to the cytoplasm. It catalyses the reaction tRNA(Ile) + L-isoleucine + ATP = L-isoleucyl-tRNA(Ile) + AMP + diphosphate. Its function is as follows. Catalyzes the attachment of isoleucine to tRNA(Ile). As IleRS can inadvertently accommodate and process structurally similar amino acids such as valine, to avoid such errors it has two additional distinct tRNA(Ile)-dependent editing activities. One activity is designated as 'pretransfer' editing and involves the hydrolysis of activated Val-AMP. The other activity is designated 'posttransfer' editing and involves deacylation of mischarged Val-tRNA(Ile). This is Isoleucine--tRNA ligase from Pyrobaculum aerophilum (strain ATCC 51768 / DSM 7523 / JCM 9630 / CIP 104966 / NBRC 100827 / IM2).